We begin with the raw amino-acid sequence, 1568 residues long: Plexin-C1 (1568 aa).

An N-terminal signal peptide occupies residues 1-34 (MEVSRRKAPPRPPRPAAPLPLLAYLLALAAPGRG). In terms of domain architecture, Sema spans 35 to 452 (ADEPVWRSEQ…AGKEVRRIRV (418 aa)). Topologically, residues 35 to 944 (ADEPVWRSEQ…YVEQESVPST (910 aa)) are extracellular. The cysteines at positions 64 and 87 are disulfide-linked. N-linked (GlcNAc...) asparagine glycans are attached at residues Asn86, Asn141, and Asn149. 3 disulfides stabilise this stretch: Cys156–Cys194, Cys226–Cys354, and Cys283–Cys329. Residues Asn241 and Asn252 are each glycosylated (N-linked (GlcNAc...) asparagine). N-linked (GlcNAc...) asparagine glycosylation is found at Asn386 and Asn407. 4 disulfide bridges follow: Cys455–Cys472, Cys461–Cys506, Cys464–Cys481, and Cys475–Cys487. 9 N-linked (GlcNAc...) asparagine glycosylation sites follow: Asn548, Asn582, Asn653, Asn692, Asn771, Asn796, Asn821, Asn871, and Asn890. The chain crosses the membrane as a helical span at residues 945-965 (WYFLIVLPVLLVIVIFAAVGV). Residues 966-1568 (TRHKSKELSR…FDEKKKCKWM (603 aa)) lie on the Cytoplasmic side of the membrane. Residue Ser978 is modified to Phosphoserine.

It belongs to the plexin family. As to quaternary structure, monomer. Homodimer. Interacts with SEMA7A. N-glycosylated. As to expression, detected in heart, brain, lung, spleen and placenta.

It localises to the membrane. Functionally, receptor for SEMA7A, for smallpox semaphorin A39R, vaccinia virus semaphorin A39R and for herpesvirus Sema protein. Binding of semaphorins triggers cellular responses leading to the rearrangement of the cytoskeleton and to secretion of IL6 and IL8. The sequence is that of Plexin-C1 (PLXNC1) from Homo sapiens (Human).